A 293-amino-acid polypeptide reads, in one-letter code: Deubiquitinase OTUD6B (293 aa).

Position 1 is an N-acetylmethionine (methionine 1). The OTU domain occupies 147–284 (LEIKQIPSDG…GEHYNSVTRL (138 aa)). The interval 152 to 158 (IPSDGHC) is cys-loop. Residue aspartate 155 is part of the active site. Cysteine 158 functions as the Nucleophile in the catalytic mechanism. Residues 219–229 (IVNTAAWGGQL) are variable-loop. The interval 267 to 277 (YMRHAYGLGEH) is his-loop. Histidine 277 is an active-site residue.

Interacts with the eukaryotic translation initiation factor 4F complex.

It carries out the reaction Thiol-dependent hydrolysis of ester, thioester, amide, peptide and isopeptide bonds formed by the C-terminal Gly of ubiquitin (a 76-residue protein attached to proteins as an intracellular targeting signal).. Deubiquitinating enzyme that may play a role in the ubiquitin-dependent regulation of protein synthesis, downstream of mTORC1. May associate with the protein synthesis initiation complex and modify its ubiquitination to repress translation. May also repress DNA synthesis and modify different cellular targets thereby regulating cell growth and proliferation. May also play a role in proteasome assembly and function. Its function is as follows. Stimulates protein synthesis. Influences the expression of CCND1/cyclin D1 by promoting its translation and regulates MYC/c-Myc protein stability. In Homo sapiens (Human), this protein is Deubiquitinase OTUD6B.